We begin with the raw amino-acid sequence, 734 residues long: Alpha-catulin (734 aa).

Phosphoserine occurs at positions 374 and 538.

The protein belongs to the vinculin/alpha-catenin family. In terms of assembly, interacts with ARHGEF1. Interacts with DTNA. The interaction is required for correct localization of both CTNL1 and DTNA. Widely expressed. Expressed at lower level in neural tissues and at the highest level in the adrenal gland.

It is found in the cytoplasm. It localises to the cytoskeleton. Its subcellular location is the cell membrane. In terms of biological role, may modulate the Rho pathway signaling by providing a scaffold for the Lbc Rho guanine nucleotide exchange factor (ARHGEF1). This Homo sapiens (Human) protein is Alpha-catulin (CTNNAL1).